We begin with the raw amino-acid sequence, 362 residues long: O-methyltransferase 13 (362 aa).

S-adenosyl-L-homocysteine-binding residues include Ser-181, Gly-205, Asp-228, Asp-248, and Lys-262. Asp-228 contributes to the S-adenosyl-L-methionine binding site. His-266 functions as the Proton acceptor in the catalytic mechanism.

It belongs to the class I-like SAM-binding methyltransferase superfamily. Cation-independent O-methyltransferase family. Homodimer. Mainly expressed in vascular and cortical tissues.

It catalyses the reaction dopamine + S-adenosyl-L-methionine = 3-methoxytyramine + S-adenosyl-L-homocysteine + H(+). It functions in the pathway aromatic compound metabolism. It participates in alkaloid biosynthesis. Functionally, O-methyltransferase participating in the biosynthesis of natural products derived from phenylethylamine, including mescaline, a natural hallucinogen potentially used in psychotherapeutic treatments. Catalyzes the O-methylation of dopamine and 4,5-dihydroxy-3-methoxyphenethylamine. The polypeptide is O-methyltransferase 13 (Lophophora williamsii (Peyote)).